We begin with the raw amino-acid sequence, 501 residues long: Nuclear receptor-binding protein 2 (501 aa).

Residues 1 to 33 (MAAPEPAPRRAREREREREDESEDESDILEESP) form a disordered region. Positions 7 to 19 (APRRARERERERE) are enriched in basic and acidic residues. Residues 20–30 (DESEDESDILE) show a composition bias toward acidic residues. The Protein kinase domain maps to 38 to 306 (QKRREQVNQG…AHSLLFHRVL (269 aa)). T409 and T411 each carry phosphothreonine.

The protein belongs to the protein kinase superfamily. Ser/Thr protein kinase family.

The protein resides in the cytoplasm. Functionally, may regulate apoptosis of neural progenitor cells during their differentiation. This is Nuclear receptor-binding protein 2 from Homo sapiens (Human).